Here is a 928-residue protein sequence, read N- to C-terminus: 2-oxoglutarate dehydrogenase E1 component (928 aa).

This sequence belongs to the alpha-ketoglutarate dehydrogenase family. In terms of assembly, homodimer. Part of the 2-oxoglutarate dehydrogenase (OGDH) complex composed of E1 (2-oxoglutarate dehydrogenase), E2 (dihydrolipoamide succinyltransferase) and E3 (dihydrolipoamide dehydrogenase); the complex contains multiple copies of the three enzymatic components (E1, E2 and E3). The cofactor is thiamine diphosphate.

It carries out the reaction N(6)-[(R)-lipoyl]-L-lysyl-[protein] + 2-oxoglutarate + H(+) = N(6)-[(R)-S(8)-succinyldihydrolipoyl]-L-lysyl-[protein] + CO2. Functionally, E1 component of the 2-oxoglutarate dehydrogenase (OGDH) complex which catalyzes the decarboxylation of 2-oxoglutarate, the first step in the conversion of 2-oxoglutarate to succinyl-CoA and CO(2). The sequence is that of 2-oxoglutarate dehydrogenase E1 component (sucA) from Rickettsia conorii (strain ATCC VR-613 / Malish 7).